A 155-amino-acid chain; its full sequence is Putative ATP synthase protein YMF19-like protein (155 aa).

Helical transmembrane passes span 23–43, 89–109, and 117–137; these read FLWLCLFYITFYFVLYSVLVF, WRALILAYLTSIYFFPILGSF, and VDFGYIPTVCILLYVIFLFFF.

It belongs to the ATPase protein YMF19 family.

It localises to the mitochondrion membrane. This Marchantia polymorpha (Common liverwort) protein is Putative ATP synthase protein YMF19-like protein (YMF18).